The chain runs to 542 residues: Putative cysteine ligase BshC (542 aa).

Residues leucine 458–alanine 479 are a coiled coil.

This sequence belongs to the BshC family.

Its function is as follows. Involved in bacillithiol (BSH) biosynthesis. May catalyze the last step of the pathway, the addition of cysteine to glucosamine malate (GlcN-Mal) to generate BSH. The chain is Putative cysteine ligase BshC from Geobacillus sp. (strain WCH70).